Consider the following 178-residue polypeptide: Fatty-acid and retinol-binding protein 1 (178 aa).

The first 16 residues, 1-16 (MYHQLILMALIGVIMA), serve as a signal peptide directing secretion. Asn44 and Asn75 each carry an N-linked (GlcNAc...) asparagine glycan. Coiled-coil stretches lie at residues 67–89 (DAAL…ELRN) and 123–153 (KLDV…ELKA). Asn157 is a glycosylation site (N-linked (GlcNAc...) asparagine).

Belongs to the fatty-acid and retinol-binding protein (FARBP) family. Post-translationally, N-glycosylated.

It localises to the secreted. Functionally, binds retinol and different fatty acids. The sequence is that of Fatty-acid and retinol-binding protein 1 from Acanthocheilonema viteae (Filarial nematode worm).